The sequence spans 216 residues: Small ribosomal subunit protein uS3c (216 aa).

Positions 43-118 constitute a KH type-2 domain; sequence IKNYIQKNIR…KLNIAIVKIT (76 aa).

This sequence belongs to the universal ribosomal protein uS3 family. In terms of assembly, part of the 30S ribosomal subunit.

It is found in the plastid. Its subcellular location is the chloroplast. The protein is Small ribosomal subunit protein uS3c (rps3) of Phaseolus vulgaris (Kidney bean).